A 434-amino-acid polypeptide reads, in one-letter code: Tol-Pal system protein TolB (434 aa).

An N-terminal signal peptide occupies residues 1–24 (MKFSAYLTTLFIVLFSLFIQTVQA).

This sequence belongs to the TolB family. As to quaternary structure, the Tol-Pal system is composed of five core proteins: the inner membrane proteins TolA, TolQ and TolR, the periplasmic protein TolB and the outer membrane protein Pal. They form a network linking the inner and outer membranes and the peptidoglycan layer.

The protein localises to the periplasm. Its function is as follows. Part of the Tol-Pal system, which plays a role in outer membrane invagination during cell division and is important for maintaining outer membrane integrity. This chain is Tol-Pal system protein TolB, found in Histophilus somni (strain 2336) (Haemophilus somnus).